Here is a 523-residue protein sequence, read N- to C-terminus: Apoptosis inhibitor 5 (523 aa).

Residues 1-360 (MPTVEELYRN…HQLGRKLPDF (360 aa)) are ARM-like and Heat-like helical repeats. The segment at 446–523 (VQKADANQKR…RGNRSRGRIY (78 aa)) is disordered. The Nuclear localization signal motif lies at 454 to 475 (KRTSEDTTSSSPPKKASAGPKR). A compositionally biased stretch (low complexity) spans 460–471 (TTSSSPPKKASA). The span at 487–497 (KYSSNLGSFSY) shows a compositional bias: polar residues. Over residues 502 to 515 (GFRGGRGRGWGGRG) the composition is skewed to gly residues.

It belongs to the API5 family. As to quaternary structure, monomer.

It localises to the nucleus. It is found in the cytoplasm. Its function is as follows. Antiapoptotic factor that may have a role in protein assembly. In Gallus gallus (Chicken), this protein is Apoptosis inhibitor 5 (API5).